The sequence spans 417 residues: MMPTQRLAEADPQIAKLIREETRRQAEGLELIASENFVSPAVLEALGSTLTNKYAEGYPGKRYYGGCEVVDQVEQLAIDRAKQLFGADHANVQPHAGSQANMAAYFALAKPGDTVLAMSLNFGGHLTHGSPVNFSGKLFKIVPYGLRQSDETIDMDEVARLAREHKPRILMVGASAYSRTLHFDRFAEIANEVGAAMVVDMAHIAGLVAAGLHPSPVPHSEIVTTTTHKTLRGPRGGMILCREAHAKTLNSQIFPGIQGGPLEHVIAAKAVAFGEALRPEFKAYQRRIVENAQVLAEGLKSAGLRLVSGGTDNHLMLVDLRPKKLTGKIAEEALGKAGITVNKNMIPWDPEKPMTTSGIRVGTPALTTRGMGSREMTLVAALIGRVLDAPADEQVLARVRGEVKDLCAHFPMYADRV.

Residues Leu120 and 124–126 (GHL) contribute to the (6S)-5,6,7,8-tetrahydrofolate site. Residue Lys229 is modified to N6-(pyridoxal phosphate)lysine.

This sequence belongs to the SHMT family. Homodimer. Pyridoxal 5'-phosphate serves as cofactor.

Its subcellular location is the cytoplasm. The enzyme catalyses (6R)-5,10-methylene-5,6,7,8-tetrahydrofolate + glycine + H2O = (6S)-5,6,7,8-tetrahydrofolate + L-serine. Its pathway is one-carbon metabolism; tetrahydrofolate interconversion. It participates in amino-acid biosynthesis; glycine biosynthesis; glycine from L-serine: step 1/1. In terms of biological role, catalyzes the reversible interconversion of serine and glycine with tetrahydrofolate (THF) serving as the one-carbon carrier. This reaction serves as the major source of one-carbon groups required for the biosynthesis of purines, thymidylate, methionine, and other important biomolecules. Also exhibits THF-independent aldolase activity toward beta-hydroxyamino acids, producing glycine and aldehydes, via a retro-aldol mechanism. In Anaeromyxobacter dehalogenans (strain 2CP-1 / ATCC BAA-258), this protein is Serine hydroxymethyltransferase.